Reading from the N-terminus, the 385-residue chain is Probable tRNA sulfurtransferase (385 aa).

The region spanning 57–160 (DGVIERVKKV…RGNAYVFTDK (104 aa)) is the THUMP domain. Residues 180 to 181 (ML), 205 to 206 (YY), Arg-262, Gly-284, and Gln-293 each bind ATP.

The protein belongs to the ThiI family.

Its subcellular location is the cytoplasm. The catalysed reaction is [ThiI sulfur-carrier protein]-S-sulfanyl-L-cysteine + a uridine in tRNA + 2 reduced [2Fe-2S]-[ferredoxin] + ATP + H(+) = [ThiI sulfur-carrier protein]-L-cysteine + a 4-thiouridine in tRNA + 2 oxidized [2Fe-2S]-[ferredoxin] + AMP + diphosphate. It carries out the reaction [ThiS sulfur-carrier protein]-C-terminal Gly-Gly-AMP + S-sulfanyl-L-cysteinyl-[cysteine desulfurase] + AH2 = [ThiS sulfur-carrier protein]-C-terminal-Gly-aminoethanethioate + L-cysteinyl-[cysteine desulfurase] + A + AMP + 2 H(+). The protein operates within cofactor biosynthesis; thiamine diphosphate biosynthesis. Its function is as follows. Catalyzes the ATP-dependent transfer of a sulfur to tRNA to produce 4-thiouridine in position 8 of tRNAs, which functions as a near-UV photosensor. Also catalyzes the transfer of sulfur to the sulfur carrier protein ThiS, forming ThiS-thiocarboxylate. This is a step in the synthesis of thiazole, in the thiamine biosynthesis pathway. The sulfur is donated as persulfide by IscS. In Clostridium perfringens (strain ATCC 13124 / DSM 756 / JCM 1290 / NCIMB 6125 / NCTC 8237 / Type A), this protein is Probable tRNA sulfurtransferase.